A 525-amino-acid polypeptide reads, in one-letter code: Nucleolar and spindle-associated protein 1-A (525 aa).

4 disordered regions span residues 46 to 205 (ESKD…LHEA), 248 to 292 (EKTP…RFSA), 373 to 397 (TPES…PEKA), and 451 to 525 (SLSR…VPVQ). Over residues 58-69 (SSLTDTDELNSS) the composition is skewed to polar residues. Residues 82-92 (THRRGRGRKPL) show a composition bias toward basic residues. Positions 106-127 (SVGTGTESLASETDNTQDQNCL) are enriched in polar residues. Residues 160–169 (TTEKRQKKAS) are compositionally biased toward basic and acidic residues. The segment covering 270-285 (PPTTGASPSRTPTNQR) has biased composition (polar residues). A compositionally biased stretch (polar residues) spans 476–494 (CGSNNNVSVLKNNFKQPHL). The span at 495-514 (QTREDRRKQHEQDRKGKRDQ) shows a compositional bias: basic and acidic residues.

The protein belongs to the NUSAP family. In terms of assembly, interacts with DNA. Interacts with microtubules, ipo7, kpna2 and kpnb1. Microtubule stabilization is inhibited by ipo7 and kpna2, while microtubule bundling is inhibited by kpnb1. Active GTP-bound ran causes dissociation of ipo7 and kpnb1.

Its subcellular location is the cytoplasm. It localises to the nucleus. The protein localises to the cytoskeleton. The protein resides in the spindle. Functionally, microtubule-associated protein with the capacity to bundle and stabilize microtubules. May associate with chromosomes and promote the organization of meiotic or mitotic spindle microtubules around them. This chain is Nucleolar and spindle-associated protein 1-A (nusap1-a), found in Xenopus laevis (African clawed frog).